A 284-amino-acid polypeptide reads, in one-letter code: Diaminopimelate epimerase (284 aa).

Substrate is bound by residues Asn-21, Gln-54, and Asn-74. Residue Cys-83 is the Proton donor of the active site. Substrate is bound by residues 84 to 85 (GN), Asn-167, Asn-200, and 218 to 219 (ER). Catalysis depends on Cys-227, which acts as the Proton acceptor. 228–229 (GS) provides a ligand contact to substrate.

The protein belongs to the diaminopimelate epimerase family. Homodimer.

Its subcellular location is the cytoplasm. The catalysed reaction is (2S,6S)-2,6-diaminopimelate = meso-2,6-diaminopimelate. The protein operates within amino-acid biosynthesis; L-lysine biosynthesis via DAP pathway; DL-2,6-diaminopimelate from LL-2,6-diaminopimelate: step 1/1. Catalyzes the stereoinversion of LL-2,6-diaminopimelate (L,L-DAP) to meso-diaminopimelate (meso-DAP), a precursor of L-lysine and an essential component of the bacterial peptidoglycan. The chain is Diaminopimelate epimerase from Buchnera aphidicola subsp. Acyrthosiphon pisum (strain 5A).